Here is a 148-residue protein sequence, read N- to C-terminus: Small ribosomal subunit protein uS13 (148 aa).

It belongs to the universal ribosomal protein uS13 family. As to quaternary structure, part of the 30S ribosomal subunit. Forms a loose heterodimer with protein S19. Forms two bridges to the 50S subunit in the 70S ribosome.

Functionally, located at the top of the head of the 30S subunit, it contacts several helices of the 16S rRNA. In the 70S ribosome it contacts the 23S rRNA (bridge B1a) and protein L5 of the 50S subunit (bridge B1b), connecting the 2 subunits; these bridges are implicated in subunit movement. This is Small ribosomal subunit protein uS13 from Pyrococcus abyssi (strain GE5 / Orsay).